A 534-amino-acid chain; its full sequence is Paired box protein Pax-1 (534 aa).

A DNA-binding region (paired) is located at residues 98-224; the sequence is TYGEVNQLGG…SSISRILRNK (127 aa). The tract at residues 101–157 is PAI subdomain; sequence EVNQLGGVFVNGRPLPNAIRLRIVELAQLGIRPCDISRQLRVSHGCVSKILARYNET. Positions 176-224 are RED subdomain; the sequence is NVVKHIRDYKQGDPGIFAWEIRDRLLADGVCDKYNVPSVSSISRILRNK. Disordered stretches follow at residues 424-480 and 492-511; these read PSRE…AAAP and EEEA…QAQP.

It is found in the nucleus. Functionally, this protein is a transcriptional activator. It may play a role in the formation of segmented structures of the embryo. May play an important role in the normal development of the vertebral column. The protein is Paired box protein Pax-1 (PAX1) of Homo sapiens (Human).